We begin with the raw amino-acid sequence, 60 residues long: Single-pass membrane and coiled-coil domain-containing protein 4 homolog (60 aa).

Residues 1-21 (MRKLRGGQTKETRKQKQERRE) form a disordered region. Positions 8–21 (QTKETRKQKQERRE) are enriched in basic and acidic residues. A coiled-coil region spans residues 10–33 (KETRKQKQERREENLKIQQQLKTI). The chain crosses the membrane as a helical span at residues 32-52 (TIVLPICGVFLMCIVVYVFLK).

It belongs to the SMCO4 family.

Its subcellular location is the membrane. The protein is Single-pass membrane and coiled-coil domain-containing protein 4 homolog of Aedes aegypti (Yellowfever mosquito).